The following is a 102-amino-acid chain: RNA-binding protein Hfq (102 aa).

Positions 9–68 (DPFLNALRRERVPVSIYLVNGIKLQGQIESFDQFVILLKNTVSQMVYKHAISTVVPSRPV) constitute a Sm domain. A disordered region spans residues 63 to 102 (VPSRPVSHHSNNAGGGSNNYHHSNNAQPSSAASQDSEDAE). Residues 70-96 (HHSNNAGGGSNNYHHSNNAQPSSAASQ) are compositionally biased toward low complexity.

The protein belongs to the Hfq family. As to quaternary structure, homohexamer.

Its function is as follows. RNA chaperone that binds small regulatory RNA (sRNAs) and mRNAs to facilitate mRNA translational regulation in response to envelope stress, environmental stress and changes in metabolite concentrations. Also binds with high specificity to tRNAs. This chain is RNA-binding protein Hfq, found in Cronobacter sakazakii (strain ATCC BAA-894) (Enterobacter sakazakii).